The chain runs to 149 residues: 16.9 kDa class I heat shock protein 3 (149 aa).

Positions 35-149 constitute a sHSP domain; sequence DTAAFANARV…PEVKAIEISG (115 aa).

This sequence belongs to the small heat shock protein (HSP20) family. As to quaternary structure, may form oligomeric structures.

It localises to the cytoplasm. In Oryza sativa subsp. japonica (Rice), this protein is 16.9 kDa class I heat shock protein 3 (HSP16.9C).